The sequence spans 483 residues: PAT complex subunit CCDC47 (483 aa).

A signal peptide spans M1 to A20. At K21–S135 the chain is on the cytoplasmic side. The segment at M46–D118 is disordered. A compositionally biased stretch (acidic residues) spans T60–G104. A compositionally biased stretch (basic and acidic residues) spans Y105–D118. The helical transmembrane segment at Y136–I155 threads the bilayer. Topologically, residues G156 to M483 are lumenal. The N-linked (GlcNAc...) asparagine glycan is linked to N178. The tract at residues Q424 to M483 is disordered. Basic and acidic residues predominate over residues Q430–Q472. Residues P450 to M483 adopt a coiled-coil conformation. The segment covering M473–M483 has biased composition (basic residues).

It belongs to the CCDC47 family. In terms of assembly, component of the PAT complex, composed of WDR83OS/Asterix and CCDC47. The PAT complex is part of the multi-pass translocon (MPT) complex, composed of three subcomplexes, the GEL complex (composed of RAB5IF/OPTI and TMCO1), the BOS complex (composed of NCLN/Nicalin, NOMO and TMEM147) and the PAT complex (composed of WDR83OS/Asterix and CCDC47). The MPT complex associates with the SEC61 complex. Interacts with VCP, HSPA5, DERL1, DERL2 and SELENOS.

The protein localises to the endoplasmic reticulum membrane. The protein resides in the rough endoplasmic reticulum membrane. Component of the multi-pass translocon (MPT) complex that mediates insertion of multi-pass membrane proteins into the lipid bilayer of membranes. The MPT complex takes over after the SEC61 complex: following membrane insertion of the first few transmembrane segments of proteins by the SEC61 complex, the MPT complex occludes the lateral gate of the SEC61 complex to promote insertion of subsequent transmembrane regions. Within the MPT complex, the PAT subcomplex sequesters any highly polar regions in the transmembrane domains away from the non-polar membrane environment until they can be buried in the interior of the fully assembled protein. Within the PAT subcomplex, CCDC47 occludes the lateral gate of the SEC61 complex. Involved in the regulation of calcium ion homeostasis in the ER. Required for proper protein degradation via the ERAD (ER-associated degradation) pathway. Has an essential role in the maintenance of ER organization during embryogenesis. This is PAT complex subunit CCDC47 from Homo sapiens (Human).